We begin with the raw amino-acid sequence, 123 residues long: Fluoride-specific ion channel FluC (123 aa).

The next 4 membrane-spanning stretches (helical) occupy residues 7–27 (MAIA…SGLL), 39–59 (MVNS…FWGF), 68–88 (FFGT…YETF), and 101–121 (LNIL…FMLA). Positions 75 and 78 each coordinate Na(+).

It belongs to the fluoride channel Fluc/FEX (TC 1.A.43) family.

The protein resides in the cell membrane. It catalyses the reaction fluoride(in) = fluoride(out). Na(+) is not transported, but it plays an essential structural role and its presence is essential for fluoride channel function. Functionally, fluoride-specific ion channel. Important for reducing fluoride concentration in the cell, thus reducing its toxicity. The protein is Fluoride-specific ion channel FluC of Thermococcus kodakarensis (strain ATCC BAA-918 / JCM 12380 / KOD1) (Pyrococcus kodakaraensis (strain KOD1)).